The chain runs to 333 residues: Viral cathepsin (333 aa).

The N-terminal stretch at 1–20 (MTKLLNFVILASVLTVTAHA) is a signal peptide. Positions 21-124 (LTYDLNNSDE…VIKDEPQALL (104 aa)) are cleaved as a propeptide — activation peptide. Cystine bridges form between cysteine 145–cysteine 186, cysteine 179–cysteine 219, and cysteine 272–cysteine 321. Cysteine 148 is an active-site residue. Residue asparagine 170 is glycosylated (N-linked (GlcNAc...) asparagine; by host). Catalysis depends on residues histidine 280 and asparagine 300.

Belongs to the peptidase C1 family. In terms of processing, synthesized as an inactive proenzyme and activated by proteolytic removal of the inhibitory propeptide.

It catalyses the reaction Endopeptidase of broad specificity, hydrolyzing substrates of both cathepsin L and cathepsin B.. Its function is as follows. Cysteine protease that plays an essential role in host liquefaction to facilitate horizontal transmission of the virus. May participate in the degradation of foreign protein expressed by the baculovirus system. This Cydia pomonella granulosis virus (isolate Mexico/1963) (CpGV) protein is Viral cathepsin (VCATH).